The sequence spans 181 residues: Inner membrane-spanning protein YciB (181 aa).

5 helical membrane passes run 10 to 30, 50 to 70, 72 to 92, 118 to 138, and 148 to 168; these read LIIF…GALI, MHLI…VFHD, AFIK…LGVS, VTWY…YVAF, and FKVF…VFYL.

This sequence belongs to the YciB family.

It localises to the cell inner membrane. Plays a role in cell envelope biogenesis, maintenance of cell envelope integrity and membrane homeostasis. This chain is Inner membrane-spanning protein YciB, found in Shewanella sp. (strain MR-4).